Here is a 276-residue protein sequence, read N- to C-terminus: Proteasome subunit beta type-8 (276 aa).

The propeptide at Met-1–Gly-72 is removed in mature form. Thr-73 serves as the catalytic Nucleophile.

Belongs to the peptidase T1B family. In terms of assembly, the 26S proteasome consists of a 20S proteasome core and two 19S regulatory subunits. The 20S proteasome core is composed of 28 subunits that are arranged in four stacked rings, resulting in a barrel-shaped structure. The two end rings are each formed by seven alpha subunits, and the two central rings are each formed by seven beta subunits. The catalytic chamber with the active sites is on the inside of the barrel. Component of the immunoproteasome, where it displaces the equivalent housekeeping subunit PSMB5. Component of the spermatoproteasome, a form of the proteasome specifically found in testis. Directly interacts with POMP. Interacts with TAP1. In terms of processing, autocleaved. The resulting N-terminal Thr residue of the mature subunit is responsible for the nucleophile proteolytic activity.

It localises to the cytoplasm. The protein resides in the nucleus. It catalyses the reaction Cleavage of peptide bonds with very broad specificity.. Its function is as follows. The proteasome is a multicatalytic proteinase complex which is characterized by its ability to cleave peptides with Arg, Phe, Tyr, Leu, and Glu adjacent to the leaving group at neutral or slightly basic pH. The proteasome has an ATP-dependent proteolytic activity. This subunit is involved in antigen processing to generate class I binding peptides. May participate in the generation of spliced peptides resulting from the ligation of two separate proteasomal cleavage products that are not contiguous in the parental protein. Required for adipocyte differentiation. This is Proteasome subunit beta type-8 (Psmb8) from Rattus norvegicus (Rat).